A 422-amino-acid chain; its full sequence is UDP-N-acetylglucosamine 1-carboxyvinyltransferase (422 aa).

22–23 (KN) is a binding site for phosphoenolpyruvate. Position 94 (Arg94) interacts with UDP-N-acetyl-alpha-D-glucosamine. Residue Cys118 is the Proton donor of the active site. The residue at position 118 (Cys118) is a 2-(S-cysteinyl)pyruvic acid O-phosphothioketal. UDP-N-acetyl-alpha-D-glucosamine is bound by residues 123–127 (RPVDL), Asp309, and Ile331.

The protein belongs to the EPSP synthase family. MurA subfamily.

Its subcellular location is the cytoplasm. The catalysed reaction is phosphoenolpyruvate + UDP-N-acetyl-alpha-D-glucosamine = UDP-N-acetyl-3-O-(1-carboxyvinyl)-alpha-D-glucosamine + phosphate. The protein operates within cell wall biogenesis; peptidoglycan biosynthesis. Cell wall formation. Adds enolpyruvyl to UDP-N-acetylglucosamine. This chain is UDP-N-acetylglucosamine 1-carboxyvinyltransferase, found in Cereibacter sphaeroides (strain ATCC 17029 / ATH 2.4.9) (Rhodobacter sphaeroides).